The chain runs to 274 residues: 16S rRNA (guanine(1405)-N(7))-methyltransferase (274 aa).

Residues F64, 102–104 (HVS), R108, A133, D156, 182–183 (DL), L198, and Q207 each bind S-adenosyl-L-methionine.

The protein belongs to the methyltransferase superfamily. Aminoglycoside resistance family.

The catalysed reaction is guanosine(1405) in 16S rRNA + S-adenosyl-L-methionine = N(7)-methylguanosine(1405) in 16S rRNA + S-adenosyl-L-homocysteine. In terms of biological role, specifically methylates the N(7) position of guanine 1405 in 16S rRNA. Confers resistance to various aminoglycosides, including gentamicin and kanamycin. This chain is 16S rRNA (guanine(1405)-N(7))-methyltransferase (grm), found in Micromonospora echinospora (Micromonospora purpurea).